The following is a 332-amino-acid chain: Serine, glycine, tyrosine and glutamine-rich protein (332 aa).

A signal peptide spans 1 to 17 (MMKTVLLLVVLVGVAYC). Residues 39-81 (SSSSSSSSSSGGGGSSGGGASGGGGGGGSSGGGGASGGGGGGS) are disordered. The span at 48–81 (SGGGGSSGGGASGGGGGGGSSGGGGASGGGGGGS) shows a compositional bias: gly residues.

In terms of tissue distribution, prismatic layer of shell (at protein level). Expressed primarily in the mantle with highest level in the mantle edge and lower level in the mantle pallium.

The protein resides in the secreted. This chain is Serine, glycine, tyrosine and glutamine-rich protein, found in Margaritifera margaritifera (Freshwater pearl mussel).